A 201-amino-acid polypeptide reads, in one-letter code: Nascent polypeptide-associated complex subunit alpha (201 aa).

The segment covering Met1 to Asp20 has biased composition (basic and acidic residues). Disordered stretches follow at residues Met1–Glu51 and Ala118–Lys165. A compositionally biased stretch (acidic residues) spans Asp21–Thr36. Residues Ser48–Ala113 enclose the NAC-A/B domain. The segment covering Gly126–Glu149 has biased composition (basic and acidic residues). Acidic residues predominate over residues Glu150–Gly161. One can recognise a UBA domain in the interval Ile162–Ser200.

Belongs to the NAC-alpha family. In terms of assembly, part of the nascent polypeptide-associated complex (NAC), consisting of EGD2 and EGD1. NAC associates with ribosomes via EGD1.

The protein resides in the cytoplasm. Its subcellular location is the nucleus. In terms of biological role, component of the nascent polypeptide-associated complex (NAC), a dynamic component of the ribosomal exit tunnel, protecting the emerging polypeptides from interaction with other cytoplasmic proteins to ensure appropriate nascent protein targeting. The NAC complex also promotes mitochondrial protein import by enhancing productive ribosome interactions with the outer mitochondrial membrane and blocks the inappropriate interaction of ribosomes translating non-secretory nascent polypeptides with translocation sites in the membrane of the endoplasmic reticulum. EGD2 may also be involved in transcription regulation. The polypeptide is Nascent polypeptide-associated complex subunit alpha (EGD2) (Pyricularia oryzae (strain 70-15 / ATCC MYA-4617 / FGSC 8958) (Rice blast fungus)).